A 114-amino-acid polypeptide reads, in one-letter code: T cell receptor beta variable 4-1 (114 aa).

The signal sequence occupies residues 1–21 (MGCRLLCCAVLCLLGAVPIDT). The region spanning 22–114 (EVTQTPKHLV…SALYLCASSQ (93 aa)) is the Ig-like domain. An intrachain disulfide couples cysteine 42 to cysteine 110. Asparagine 76 and asparagine 89 each carry an N-linked (GlcNAc...) asparagine glycan.

In terms of assembly, alpha-beta TR is a heterodimer composed of an alpha and beta chain; disulfide-linked. The alpha-beta TR is associated with the transmembrane signaling CD3 coreceptor proteins to form the TR-CD3 (TcR or TCR). The assembly of alpha-beta TR heterodimers with CD3 occurs in the endoplasmic reticulum where a single alpha-beta TR heterodimer associates with one CD3D-CD3E heterodimer, one CD3G-CD3E heterodimer and one CD247 homodimer forming a stable octameric structure. CD3D-CD3E and CD3G-CD3E heterodimers preferentially associate with TR alpha and TR beta chains, respectively. The association of the CD247 homodimer is the last step of TcR assembly in the endoplasmic reticulum and is required for transport to the cell surface.

It localises to the cell membrane. Functionally, v region of the variable domain of T cell receptor (TR) beta chain that participates in the antigen recognition. Alpha-beta T cell receptors are antigen specific receptors which are essential to the immune response and are present on the cell surface of T lymphocytes. Recognize peptide-major histocompatibility (MH) (pMH) complexes that are displayed by antigen presenting cells (APC), a prerequisite for efficient T cell adaptive immunity against pathogens. Binding of alpha-beta TR to pMH complex initiates TR-CD3 clustering on the cell surface and intracellular activation of LCK that phosphorylates the ITAM motifs of CD3G, CD3D, CD3E and CD247 enabling the recruitment of ZAP70. In turn ZAP70 phosphorylates LAT, which recruits numerous signaling molecules to form the LAT signalosome. The LAT signalosome propagates signal branching to three major signaling pathways, the calcium, the mitogen-activated protein kinase (MAPK) kinase and the nuclear factor NF-kappa-B (NF-kB) pathways, leading to the mobilization of transcription factors that are critical for gene expression and essential for T cell growth and differentiation. The T cell repertoire is generated in the thymus, by V-(D)-J rearrangement. This repertoire is then shaped by intrathymic selection events to generate a peripheral T cell pool of self-MH restricted, non-autoaggressive T cells. Post-thymic interaction of alpha-beta TR with the pMH complexes shapes TR structural and functional avidity. This is T cell receptor beta variable 4-1 from Homo sapiens (Human).